A 576-amino-acid polypeptide reads, in one-letter code: MDANSINSFFLIGALLTAVSVLLSPMSSRLGIPILLIFLAVGILAGEDGPGGILFDDYSTAYLVSNLALAIILLDGGMRTRVASFRVALWPALSLATFGVAITTSITGMMAAWLFDLHWLQGLLVGAIVGSTDAAAVFSLLKGRSLNERVGATLEIESGSNDPMAVFLTVTLIAILANVDTEMSFSFMFISFIKQFGLGICLGLGGGWMLWKLVNLSKLADGLYSILVLSGGLIIYAASNKLGGSGILSIYLVGLFLGNKPTRGRHAILNVLDGMTWVSQIGMFLVLGLLLTPSDLVDILIPGFALAFGMILFARPVAVWISLLPFKSFSSRDRWFISWVGLRGAVPIILAVFPMMAGLPGAQLYFNLAFFVVLVSLLVQGASLTTAARLAKVELPPKPLPVSRSGVEIYPSSEWEVFVYRLSESKWCIGEPLKRLAMPDGTRIAAVFRNDTLLHPSGSTRLEAGDILCVLGQEKSLEALSNLFSQAPENKEVQRFFGDFFIETDVKLADLAPIYGLSLDNLADDMTVADLVVSQLGANPVLGDQFQWQSLHWVVAGLYEGKVTNVGIRLPTEHAL.

The next 13 helical transmembrane spans lie at I6–M26, I34–L54, Y58–M78, V87–T107, M109–V129, P163–M183, F185–G205, L219–S239, L242–T262, V271–L291, I299–V319, W335–M355, and L359–V379. One can recognise an RCK C-terminal domain in the interval S405 to Q486.

It belongs to the monovalent cation:proton antiporter 1 (CPA1) transporter (TC 2.A.36) family. NhaP2 subfamily.

It localises to the cell inner membrane. The enzyme catalyses K(+)(in) + H(+)(out) = K(+)(out) + H(+)(in). Functionally, k(+)/H(+) antiporter that extrudes potassium in exchange for external protons and maintains the internal concentration of potassium under toxic levels. The protein is K(+)/H(+) antiporter NhaP2 of Shewanella baltica (strain OS155 / ATCC BAA-1091).